We begin with the raw amino-acid sequence, 470 residues long: Pancreatic lipase-related protein 2 (470 aa).

Positions 1-18 are cleaved as a signal peptide; that stretch reads MMLFVWTTGLLLLATARG. Cysteines 22 and 28 form a disulfide. The segment at 94-106 is required for galactolipase activity; the sequence is IHGFIDNGEKDWL. A disulfide bridge links Cys110 with Cys121. The active-site Nucleophile is the Ser172. Catalysis depends on Asp196, which acts as the Charge relay system. Positions 207, 210, 212, and 215 each coordinate Ca(2+). A disulfide bridge connects residues Cys257 and Cys281. The segment at 258-280 is required for galactolipase activity; sequence EKNIISTIVDVNGFLEGITSLAA. The active-site Charge relay system is the His283. 2 disulfides stabilise this stretch: Cys305–Cys316 and Cys319–Cys324. Residues Asn354 and Asn429 are each glycosylated (N-linked (GlcNAc...) asparagine). The 113-residue stretch at 358–470 folds into the PLAT domain; it reads WRYKVSVTLS…EDVLQSLSPC (113 aa). An intrachain disulfide couples Cys454 to Cys470.

This sequence belongs to the AB hydrolase superfamily. Lipase family. In terms of tissue distribution, pancreas.

The protein localises to the secreted. The protein resides in the zymogen granule membrane. Its subcellular location is the cell projection. It is found in the neuron projection. It carries out the reaction a triacylglycerol + H2O = a diacylglycerol + a fatty acid + H(+). It catalyses the reaction a 1,2-diacyl-3-O-(beta-D-galactosyl)-sn-glycerol + 2 H2O = 3-beta-D-galactosyl-sn-glycerol + 2 a fatty acid + 2 H(+). The catalysed reaction is 1,2,3-tri-(9Z-octadecenoyl)-glycerol + H2O = di-(9Z)-octadecenoylglycerol + (9Z)-octadecenoate + H(+). The enzyme catalyses di-(9Z)-octadecenoylglycerol + H2O = (9Z-octadecenoyl)-glycerol + (9Z)-octadecenoate + H(+). It carries out the reaction (9Z-octadecenoyl)-glycerol + H2O = glycerol + (9Z)-octadecenoate + H(+). It catalyses the reaction 1-(9Z-octadecenoyl)-glycerol + H2O = glycerol + (9Z)-octadecenoate + H(+). The catalysed reaction is 1,2,3-tripropanoylglycerol + H2O = dipropanoylglycerol + propanoate + H(+). The enzyme catalyses 1,2,3-tributanoylglycerol + H2O = dibutanoylglycerol + butanoate + H(+). It carries out the reaction 1,2,3-trioctanoylglycerol + H2O = dioctanoylglycerol + octanoate + H(+). It catalyses the reaction 1,2-didecanoylglycerol + H2O = decanoylglycerol + decanoate + H(+). The catalysed reaction is long chain 1,2-diacyl-3-O-beta-D-galactosyl-sn-glycerol + H2O = long chain acyl-3-O-beta-D-galactosyl-sn-glycerol + a fatty acid + H(+). The enzyme catalyses 1,2-dioctanoyl-3-O-beta-D-galactosyl-sn-glycerol + H2O = octanoyl-3-(beta-D-galactosyl)-sn-glycerol + octanoate + H(+). It carries out the reaction 1,2-didodecanoyl-3-beta-D-galactosyl-sn-glycerol + H2O = dodecanoyl-3-beta-D-galactosyl-sn-glycerol + dodecanoate + H(+). It catalyses the reaction 1-beta-D-galactosyl-2,3-didodecanoyl-sn-glycerol + H2O = 1-beta-D-galactosyl-dodecanoyl-sn-glycerol + dodecanoate + H(+). The catalysed reaction is a 1,2-diacyl-3-O-[alpha-D-galactosyl-(1-&gt;6)-beta-D-galactosyl]-sn-glycerol + H2O = acyl-3-O-[alpha-D-galactosyl-(1-&gt;6)-beta-D-galactosyl]-sn-glycerol + a fatty acid + H(+). The enzyme catalyses long chain 1,2-diacyl-3-O-[alpha-D-galactosyl-(1-&gt;6)-beta-D-galactosyl]-sn-glycerol + H2O = long chain acyl-3-O-[alpha-D-galactosyl-(1-&gt;6)-beta-D-galactosyl]-sn-glycerol + a fatty acid + H(+). It carries out the reaction 1,2-dioctanoyl-3-O-[alpha-D-galactosyl-(1-&gt;6)-beta-D-galactosyl]-sn-glycerol + H2O = octanoyl-3-O-[alpha-D-galactosyl-(1-&gt;6)-beta-D-galactosyl]-sn-glycerol + octanoate + H(+). It catalyses the reaction 1,2-didodecanoyl-3-O-[alpha-D-galactosyl-(1-&gt;6)-beta-D-galactosyl]-sn-glycerol + H2O = dodecanoyl-3-O-[alpha-D-galactosyl-(1-&gt;6)-beta-D-galactosyl]-sn-glycerol + dodecanoate + H(+). The catalysed reaction is a 1,2-diacyl-sn-glycero-3-phosphocholine + H2O = a monoacyl-sn-glycero-3-phosphocholine + a fatty acid + H(+). It functions in the pathway glycerolipid metabolism; triacylglycerol degradation. Its pathway is glycolipid metabolism. Its activity is regulated as follows. Triacylglycerol lipase activity is inhibited by increasing bile salts concentrations and not reactivated by CLPS. Lipase that primarily hydrolyzes triglycerides and galactosylglycerides. In neonates, may play a major role in pancreatic digestion of dietary fats such as milk fat globules enriched in long-chain triglycerides. Hydrolyzes short-, medium- and long-chain fatty acyls in triglycerides without apparent positional specificity. Can completely deacylate triacylglycerols. When the liver matures and bile salt synthesis increases, likely functions mainly as a galactolipase and monoacylglycerol lipase. Hydrolyzes monogalactosyldiglycerols (MGDG) and digalactosyldiacylglycerols (DGDG) present in a plant-based diet, releasing long-chain polyunsaturated fatty acids. Hydrolyzes medium- and long-chain fatty acyls in galactolipids. May act together with LIPF to hydrolyze partially digested triglycerides. Hydrolyzes long-chain monoglycerides with high efficiency. In cytotoxic T cells, contributes to perforin-dependent cell lysis, but is unlikely to mediate direct cytotoxicity. Also has low phospholipase activity. In neurons, required for the localization of the phospholipid 1-oleoyl-2-palmitoyl-PC (OPPC) to neurite tips through acyl chain remodeling of membrane phospholipids. The resulting OPPC-rich lipid membrane domain recruits the t-SNARE protein STX4 by selectively interacting with the STX4 transmembrane domain and this promotes surface expression of the dopamine transporter SLC6A3/DAT at neurite tips by facilitating fusion of SLC6A3-containing transport vesicles with the plasma membrane. The polypeptide is Pancreatic lipase-related protein 2 (Myocastor coypus (Coypu)).